We begin with the raw amino-acid sequence, 354 residues long: 5,10-methenyltetrahydromethanopterin hydrogenase (354 aa).

It belongs to the HMD family.

It carries out the reaction 5,10-methenyl-5,6,7,8-tetrahydromethanopterin + H2 = 5,10-methylenetetrahydromethanopterin + H(+). Its pathway is one-carbon metabolism; methanogenesis from CO(2); 5,10-methylene-5,6,7,8-tetrahydromethanopterin from 5,10-methenyl-5,6,7,8-tetrahydromethanopterin (hydrogen route): step 1/1. Functionally, catalyzes the reversible reduction of methenyl-H(4)MPT(+) to methylene-H(4)MPT. The protein is 5,10-methenyltetrahydromethanopterin hydrogenase of Methanococcus maripaludis (strain DSM 14266 / JCM 13030 / NBRC 101832 / S2 / LL).